A 525-amino-acid chain; its full sequence is Squalene epoxidase 3 (525 aa).

Residues 9–29 (HCILTTTFVASLFAFLLLYVL) traverse the membrane as a helical segment. FAD-binding positions include 64 to 65 (VA), 84 to 85 (ER), arginine 92, arginine 163, valine 179, aspartate 341, and methionine 354. 2 consecutive transmembrane segments (helical) span residues 452-472 (LVLH…VPLP) and 477-497 (LWLG…IIKA).

This sequence belongs to the squalene monooxygenase family. It depends on FAD as a cofactor. Expressed in seedlings, leaves, stems, inflorescences and siliques.

Its subcellular location is the membrane. It catalyses the reaction squalene + reduced [NADPH--hemoprotein reductase] + O2 = (S)-2,3-epoxysqualene + oxidized [NADPH--hemoprotein reductase] + H2O + H(+). The protein operates within terpene metabolism; lanosterol biosynthesis; lanosterol from farnesyl diphosphate: step 2/3. In terms of biological role, catalyzes the stereospecific oxidation of squalene to (S)-2,3-epoxysqualene, and is considered to be a rate-limiting enzyme in steroid biosynthesis. Can produce not only oxidosqualene, but also 2,3:22,23-dioxidosqualene. The sequence is that of Squalene epoxidase 3 (SQE3) from Arabidopsis thaliana (Mouse-ear cress).